Consider the following 251-residue polypeptide: Capsid protein (251 aa).

The disordered stretch occupies residues methionine 1–isoleucine 29. The Bipartite nuclear localization signal signature appears at lysine 3–asparagine 20. The span at alanine 12 to proline 25 shows a compositional bias: polar residues. The Nuclear localization signal signature appears at lysine 35–arginine 49. A zinc finger spans residues cysteine 63–histidine 80. The Nuclear export signal signature appears at isoleucine 96–methionine 117. The Bipartite nuclear localization signal motif lies at arginine 195 to arginine 242.

The protein belongs to the geminiviridae capsid protein family. In terms of assembly, homomultimer. Binds to single-stranded and double-stranded viral DNA. Interacts (via nuclear localization signals) with host importin alpha-1a.

Its subcellular location is the virion. It is found in the host nucleus. In terms of biological role, encapsidates the viral DNA into characteristic twinned ('geminate') particles. Binds the genomic viral ssDNA and shuttles it into and out of the cell nucleus. The CP of bipartite geminiviruses is not required for cell-to-cell or systemic movement. The chain is Capsid protein from Solanum tuberosum (Potato).